Reading from the N-terminus, the 601-residue chain is NADPH--cytochrome P450 reductase (601 aa).

Positions 25-169 (IVVFYGSQTG…DFVTWREQFW (145 aa)) constitute a Flavodoxin-like domain. FMN is bound by residues 31–36 (SQTGTG), 83–86 (ATYG), 118–127 (LGDKTYEHYN), and Asp-153. Residues 224–425 (KNPFLAPVTV…ICAVLVEYXT (202 aa)) form the FAD-binding FR-type domain. Residues 399 to 402 (RYYS), 417 to 419 (CAV), Tyr-423, and 427 to 430 (GVAT) contribute to the FAD site. NADP(+) contacts are provided by residues Thr-458, 519–520 (SR), 525–529 (KVYVQ), and Asp-562. Trp-600 is an FAD binding site.

This sequence belongs to the NADPH--cytochrome P450 reductase family. It in the N-terminal section; belongs to the flavodoxin family. In the C-terminal section; belongs to the flavoprotein pyridine nucleotide cytochrome reductase family. The cofactor is FAD. FMN is required as a cofactor.

The protein localises to the endoplasmic reticulum membrane. It catalyses the reaction 2 oxidized [cytochrome P450] + NADPH = 2 reduced [cytochrome P450] + NADP(+) + H(+). In terms of biological role, this enzyme is required for electron transfer from NADP to cytochrome P450 in microsomes. It can also provide electron transfer to heme oxygenase and cytochrome B5. In Salmo trutta (Brown trout), this protein is NADPH--cytochrome P450 reductase.